The primary structure comprises 128 residues: 3-aminoacrylate deaminase RutC (128 aa).

This sequence belongs to the RutC family. Homotrimer.

The enzyme catalyses (Z)-3-aminoacrylate + H2O + H(+) = 3-oxopropanoate + NH4(+). Its function is as follows. Involved in pyrimidine catabolism. Catalyzes the deamination of 3-aminoacrylate to malonic semialdehyde, a reaction that can also occur spontaneously. RutC may facilitate the reaction and modulate the metabolic fitness, rather than catalyzing essential functions. The polypeptide is 3-aminoacrylate deaminase RutC (Escherichia coli O157:H7).